The primary structure comprises 538 residues: Natural resistance-associated macrophage protein 1 (538 aa).

The segment at 1–36 (MTGDTDPPKQSRTQYGSISSSPSPGPPQVPPGGTYL) is disordered. Over 1 to 54 (MTGDTDPPKQSRTQYGSISSSPSPGPPQVPPGGTYLSEKIPIPNAEPGTFSLRK) the chain is Cytoplasmic. A helical membrane pass occupies residues 55-75 (LWAFTGPGFLMSIAYLDPGNI). The Extracellular portion of the chain corresponds to 76 to 81 (QSDLQA). Residues 82–102 (GAVAGFKLLWVLLWATVLGLL) form a helical membrane-spanning segment. Over 103-139 (CQRLAARLGVVTGKDLGEICHLYYPKVPRTLLWLNME) the chain is Cytoplasmic. A helical transmembrane segment spans residues 140–160 (LAIVGSDMQEVIGTAIAFNLL). Residues 161–164 (SAGR) are Extracellular-facing. Residues 165-185 (IPLWGGVLITVVDTFFFLYLN) form a helical membrane-spanning segment. At 186–193 (NYGLRKLE) the chain is on the cytoplasmic side. Residues 194-214 (AFFAFLIAIMAFTFGYEYVVA) traverse the membrane as a helical segment. Topologically, residues 215–240 (RPAQGALLRGLFLPSCSGCGQPELLQ) are extracellular. A helical transmembrane segment spans residues 241–261 (AVGIVGAIIMPHNIYLHSALV). At 262-286 (KSREVDRTRREDIREANMYFLIEST) the chain is on the cytoplasmic side. A helical transmembrane segment spans residues 287 to 307 (IALFVSFFINLFVMAVFGQAF). Residues 308–346 (YQQTNQAAFNICANSSLHDYAKIFPRNNLTVAVDFYQGG) lie on the Extracellular side of the membrane. 2 N-linked (GlcNAc...) asparagine glycosylation sites follow: Asn321 and Asn335. A helical transmembrane segment spans residues 347–367 (VILGCLFGPAALYIWAVGLLA). Over 368–394 (AGQSSTMTGTYAGQFVMEGFLKLRWSR) the chain is Cytoplasmic. A helical membrane pass occupies residues 395–415 (FARLLLTRSCAILPALLVAVF). At 416–432 (KELQDLSSLNDLLNVLQ) the chain is on the extracellular side. A helical transmembrane segment spans residues 433 to 453 (SLLLPFAVLPILTFTSMPALM). The Cytoplasmic segment spans residues 454–468 (QEFASGRVNKVITSS). Residues 469-489 (IMLLVCAINFYFLVSYLPSLP) form a helical membrane-spanning segment. Topologically, residues 490 to 492 (HPA) are extracellular. Residues 493–513 (YFGLVALLAVIYLGLTTYLVW) traverse the membrane as a helical segment. Residues 514–538 (TCLIAHGATLLVHSSHQHFLYGLLE) lie on the Cytoplasmic side of the membrane.

This sequence belongs to the NRAMP family.

Its subcellular location is the late endosome membrane. It is found in the lysosome membrane. The enzyme catalyses Zn(2+)(in) + H(+)(out) = Zn(2+)(out) + H(+)(in). It carries out the reaction Fe(2+)(in) + H(+)(out) = Fe(2+)(out) + H(+)(in). The catalysed reaction is Mn(2+)(in) + H(+)(out) = Mn(2+)(out) + H(+)(in). Its function is as follows. Macrophage-specific antiporter that fluxes metal ions in either direction against a proton gradient. Localized to late endosomal lysosomal membranes, delivers bivalent cations from the cytosol into these acidic compartments where they may directly affect antimicrobial activity. Involved in iron metabolism and host natural resistance to infection with intracellular parasites. Pathogen resistance involves sequestration of Fe(2+) and Mn(2+), cofactors of both prokaryotic and eukaryotic catalases and superoxide dismutases, not only to protect the macrophage against its own generation of reactive oxygen species, but to deny the cations to the pathogen for synthesis of its protective enzymes. This is Natural resistance-associated macrophage protein 1 (SLC11A1) from Sus scrofa (Pig).